We begin with the raw amino-acid sequence, 317 residues long: Ribosomal protein L11 methyltransferase (317 aa).

4 residues coordinate S-adenosyl-L-methionine: T169, G190, D211, and N256.

Belongs to the methyltransferase superfamily. PrmA family.

It is found in the cytoplasm. The catalysed reaction is L-lysyl-[protein] + 3 S-adenosyl-L-methionine = N(6),N(6),N(6)-trimethyl-L-lysyl-[protein] + 3 S-adenosyl-L-homocysteine + 3 H(+). In terms of biological role, methylates ribosomal protein L11. The chain is Ribosomal protein L11 methyltransferase from Helicobacter hepaticus (strain ATCC 51449 / 3B1).